A 522-amino-acid chain; its full sequence is 3'3'-cGAMP-specific phosphodiesterase 2 (522 aa).

Residues Cys36 to Met160 form the Response regulatory domain. Asp91 is subject to 4-aspartylphosphate. The HD-GYP domain maps to Leu325–Asp522. Residues His382 and Asp383 each contribute to the a divalent metal cation site. The Proton donor role is filled by Lys386. A divalent metal cation contacts are provided by His411, His437, His438, and Asp466.

Homodimer. The cofactor is Mn(2+).

It catalyses the reaction 3',3'-cGAMP + H2O = 5'-pApG-3' + H(+). Its function is as follows. Phosphodiesterase (PDE) that catalyzes the hydrolysis of 3'3'-cyclic GMP-AMP (3'3'-cGAMP), leading to linear 5'-pApG. Counteracts the function of the 3'3'-cGAMP synthase DncV, and is involved in the modulation of intracellular 3'3'-cGAMP levels. Enhances bacterial chemotaxis and inhibits intestinal colonization in vivo. Thus exerts a crucial role in regulating bacterial infectivity through catalyzing 3'3'-cGAMP degradation. Is specific for 3'3'-cGAMP since it cannot degrade other cGAMP linkage isomers (3'2'-, 2'3'-, and 2'2'-cGAMPs). Is also able to hydrolyze c-di-GMP but not c-di-AMP. This is 3'3'-cGAMP-specific phosphodiesterase 2 from Vibrio cholerae serotype O1 (strain ATCC 39315 / El Tor Inaba N16961).